A 217-amino-acid polypeptide reads, in one-letter code: MEETKSRFKRICVFCGSSSGKKPSYQEAAIQLGNELVERRIDLVYGGGSVGLMGLVSQAVHHGGRHVLGVIPKTLMPREITGETIGEVKAVADMHQRKAEMARQADAFIALPGGYGTLEELLEVITWAQLGIHRKPVGLLNVDGYYNSLLTFIDKAVDEGFISPMARRIIVSAPNAKELVRQLEEYEPEFDEITSKLVWDEVDRISYVPGSEVATAT.

Residues Glu79, 97 to 98, 114 to 120, and Thr126 contribute to the substrate site; these read RK and GYGTLEE.

Belongs to the LOG family. As to expression, expressed in roots and shoots. Detected in the epidermis of the root elongation zone, cotyledon and leaves, in trichomes and pollen.

It localises to the cytoplasm. The protein resides in the nucleus. The enzyme catalyses N(6)-(dimethylallyl)adenosine 5'-phosphate + H2O = N(6)-dimethylallyladenine + D-ribose 5-phosphate. It carries out the reaction 9-ribosyl-trans-zeatin 5'-phosphate + H2O = trans-zeatin + D-ribose 5-phosphate. Functionally, cytokinin-activating enzyme working in the direct activation pathway. Phosphoribohydrolase that converts inactive cytokinin nucleotides to the biologically active free-base forms. The polypeptide is Cytokinin riboside 5'-monophosphate phosphoribohydrolase LOG7 (LOG7) (Arabidopsis thaliana (Mouse-ear cress)).